The sequence spans 220 residues: MTSFGTLYTYMPNARVFKILAAAKLNNLIIEIPAYQHGVTNKSAEFLSKFPAGKVPAFEGPDGFCLVESDAIAQYVAQSGPQASQLLGQDAMSSAKIRQWISFFAEEIYPTVLDLVMWRVGLGAFDETTEIKALAQLAYGLSVLEKHLNPGILLTGDELTLADLTGASTLLWAFMHIIDEPMRQQYPNVVAWYLKVVQNEEVKEVFGKPNLIEKRRIGAK.

The 82-residue stretch at 3–84 (SFGTLYTYMP…YVAQSGPQAS (82 aa)) folds into the GST N-terminal domain. The 131-residue stretch at 90–220 (DAMSSAKIRQ…LIEKRRIGAK (131 aa)) folds into the GST C-terminal domain.

Belongs to the GST superfamily.

Glutathione S-transferase-like protein; part of the gene cluster that mediates the biosynthesis of the mycotoxin fusarin C. Within the cluster, FUS1, FUS2, FUS8 and FUS9 are sufficient for fusarin production. The other FUS cluster members are not essential for fusarin C biosynthesis. The chain is Glutathione S-transferase-like protein FUS3 from Gibberella moniliformis (strain M3125 / FGSC 7600) (Maize ear and stalk rot fungus).